Here is a 184-residue protein sequence, read N- to C-terminus: ADP-ribosylation factor-like protein 2 (184 aa).

Residue Gly-2 is the site of N-myristoyl glycine attachment. GTP-binding positions include 23–30 (GLDNAGKT), 66–70 (DIGGQ), and 125–128 (NKQD).

The protein belongs to the small GTPase superfamily. Arf family.

Functionally, may be involved in trafficking events within the endosomal system. This Dictyostelium discoideum (Social amoeba) protein is ADP-ribosylation factor-like protein 2 (arl2).